The sequence spans 79 residues: Small ribosomal subunit protein uS17 (79 aa).

It belongs to the universal ribosomal protein uS17 family. As to quaternary structure, part of the 30S ribosomal subunit.

In terms of biological role, one of the primary rRNA binding proteins, it binds specifically to the 5'-end of 16S ribosomal RNA. The polypeptide is Small ribosomal subunit protein uS17 (Rhodospirillum rubrum (strain ATCC 11170 / ATH 1.1.1 / DSM 467 / LMG 4362 / NCIMB 8255 / S1)).